Consider the following 507-residue polypeptide: tRNA-2-methylthio-N(6)-dimethylallyladenosine synthase (507 aa).

Residues 13–129 (RTYQVRTYGC…LPALLERARH (117 aa)) enclose the MTTase N-terminal domain. Cysteine 22, cysteine 58, cysteine 92, cysteine 166, cysteine 170, and cysteine 173 together coordinate [4Fe-4S] cluster. In terms of domain architecture, Radical SAM core spans 152-388 (RESAYAAWVS…IALQESVTLE (237 aa)). Residues 391–462 (QKQIGRMIEV…PHHLIADDGV (72 aa)) enclose the TRAM domain. Basic and acidic residues predominate over residues 459–478 (DDGVRSHRRTRAGDAHEAGK). Positions 459 to 492 (DDGVRSHRRTRAGDAHEAGKKPSTPGIGLGMPAI) are disordered.

Belongs to the methylthiotransferase family. MiaB subfamily. As to quaternary structure, monomer. It depends on [4Fe-4S] cluster as a cofactor.

The protein resides in the cytoplasm. It carries out the reaction N(6)-dimethylallyladenosine(37) in tRNA + (sulfur carrier)-SH + AH2 + 2 S-adenosyl-L-methionine = 2-methylsulfanyl-N(6)-dimethylallyladenosine(37) in tRNA + (sulfur carrier)-H + 5'-deoxyadenosine + L-methionine + A + S-adenosyl-L-homocysteine + 2 H(+). Catalyzes the methylthiolation of N6-(dimethylallyl)adenosine (i(6)A), leading to the formation of 2-methylthio-N6-(dimethylallyl)adenosine (ms(2)i(6)A) at position 37 in tRNAs that read codons beginning with uridine. The chain is tRNA-2-methylthio-N(6)-dimethylallyladenosine synthase from Mycobacteroides abscessus (strain ATCC 19977 / DSM 44196 / CCUG 20993 / CIP 104536 / JCM 13569 / NCTC 13031 / TMC 1543 / L948) (Mycobacterium abscessus).